We begin with the raw amino-acid sequence, 303 residues long: 4-diphosphocytidyl-2-C-methyl-D-erythritol kinase (303 aa).

Lysine 21 is an active-site residue. 106–116 (PVAAGIGGGSA) contributes to the ATP binding site. Residue aspartate 148 is part of the active site.

The protein belongs to the GHMP kinase family. IspE subfamily.

It catalyses the reaction 4-CDP-2-C-methyl-D-erythritol + ATP = 4-CDP-2-C-methyl-D-erythritol 2-phosphate + ADP + H(+). It functions in the pathway isoprenoid biosynthesis; isopentenyl diphosphate biosynthesis via DXP pathway; isopentenyl diphosphate from 1-deoxy-D-xylulose 5-phosphate: step 3/6. In terms of biological role, catalyzes the phosphorylation of the position 2 hydroxy group of 4-diphosphocytidyl-2C-methyl-D-erythritol. The chain is 4-diphosphocytidyl-2-C-methyl-D-erythritol kinase from Nitrobacter hamburgensis (strain DSM 10229 / NCIMB 13809 / X14).